The following is a 181-amino-acid chain: Ribonuclease HII (181 aa).

An RNase H type-2 domain is found at 1 to 181 (MICGIDEVGR…SLHRKSFRLI (181 aa)). A divalent metal cation-binding residues include Asp6, Glu7, and Asp98.

It belongs to the RNase HII family. Requires Mn(2+) as cofactor. Mg(2+) serves as cofactor.

It is found in the cytoplasm. It catalyses the reaction Endonucleolytic cleavage to 5'-phosphomonoester.. Endonuclease that specifically degrades the RNA of RNA-DNA hybrids. This is Ribonuclease HII from Borrelia recurrentis (strain A1).